Consider the following 464-residue polypeptide: ATP-dependent protease ATPase subunit HslU (464 aa).

Residues Val18, 60–65 (GVGKTE), Asp277, Glu342, and Arg414 each bind ATP.

This sequence belongs to the ClpX chaperone family. HslU subfamily. In terms of assembly, a double ring-shaped homohexamer of HslV is capped on each side by a ring-shaped HslU homohexamer. The assembly of the HslU/HslV complex is dependent on binding of ATP.

Its subcellular location is the cytoplasm. ATPase subunit of a proteasome-like degradation complex; this subunit has chaperone activity. The binding of ATP and its subsequent hydrolysis by HslU are essential for unfolding of protein substrates subsequently hydrolyzed by HslV. HslU recognizes the N-terminal part of its protein substrates and unfolds these before they are guided to HslV for hydrolysis. The sequence is that of ATP-dependent protease ATPase subunit HslU from Lactobacillus delbrueckii subsp. bulgaricus (strain ATCC BAA-365 / Lb-18).